Consider the following 313-residue polypeptide: 3-ketodihydrosphingosine reductase TSC10 (313 aa).

Leu-12 contributes to the NADP(+) binding site. NADPH-binding residues include Gly-15, Ser-17, and Gly-19. Residues 15-19 carry the GXSXG motif; sequence GGSQG. Leu-20 lines the NADP(+) pocket. NADPH contacts are provided by Arg-47, Lys-51, and Asp-86. An NADP(+)-binding site is contributed by Asp-86. The active-site Proton donor is the Ser-160. 3 residues coordinate NADP(+): Tyr-174, Lys-178, and Ser-207. Catalysis depends on Tyr-174, which acts as the Proton acceptor. The Lowers pKa of active site Tyr role is filled by Lys-178. A helical membrane pass occupies residues 278-298; that stretch reads VFSWILGALLNITIVPIYMLI.

Belongs to the short-chain dehydrogenases/reductases (SDR) family.

It localises to the endoplasmic reticulum membrane. It carries out the reaction sphinganine + NADP(+) = 3-oxosphinganine + NADPH + H(+). Its pathway is lipid metabolism; sphingolipid metabolism. Its function is as follows. Catalyzes the reduction of 3'-oxosphinganine (3-ketodihydrosphingosine/KDS) to sphinganine (dihydrosphingosine/DHS), the second step of de novo sphingolipid biosynthesis. The polypeptide is 3-ketodihydrosphingosine reductase TSC10 (TSC10) (Kluyveromyces lactis (strain ATCC 8585 / CBS 2359 / DSM 70799 / NBRC 1267 / NRRL Y-1140 / WM37) (Yeast)).